Reading from the N-terminus, the 773-residue chain is Angiomotin-like protein 2 (773 aa).

Disordered stretches follow at residues 41–157 (GGAG…HVRS), 169–238 (RNGA…SPHF), and 259–309 (QYQY…LAQM). Basic and acidic residues-rich tracts occupy residues 80–91 (QGGETHLAENRL), 100–112 (KGEELPTYEEAKA), and 141–152 (RRQDEALRELRH). The segment at 101 to 302 (GEELPTYEEA…GPPGAQATSG (202 aa)) is required for interaction with CDH5. Residue Y107 is modified to Phosphotyrosine; by FGFR1. The span at 177–190 (HMSSSHSFPQLARS) shows a compositional bias: polar residues. Pro residues predominate over residues 196-213 (PRGPPAEGPEPRGPPPQY). The required for interaction with CDH1 stretch occupies residues 220-302 (QETAAVNDPR…GPPGAQATSG (83 aa)). Positions 304-577 (AHLAQMESVL…KYLEERAMRQ (274 aa)) form a coiled coil. Residues K342 and K403 each participate in a glycyl lysine isopeptide (Lys-Gly) (interchain with G-Cter in ubiquitin) cross-link. Disordered regions lie at residues 589-611 (QRDTTLIRHSPQPSPSSSFNEGL) and 677-754 (WQGF…TTSL). Residues 701–710 (EEPPATPPLP) are compositionally biased toward pro residues. The span at 719–734 (DGSTQTDGPADSTSAC) shows a compositional bias: polar residues. A phosphoserine mark is found at S753 and S756. The short motif at 770–773 (EILI) is the PDZ-binding element.

Belongs to the angiomotin family. Part of a complex composed of AMOTL2, MAGI1 and CDH5, within the complex AMOTL2 acts as a scaffold protein for the interaction of MAGI1 with CDH5. The complex is required for coupling actin fibers to cell junctions in endothelial cells. Within the complex AMOTL2 (via its N-terminus) interacts with CDH5. Interacts (via N-terminus) with MAGI1. Interacts (via N-terminus) with ACTB; the interaction facilitates binding of cell junction complexes to actin fibers in endothelial cells. Interacts with CDH1; the interaction may facilitate binding of radial actin fibers to cell junction complexes. Interacts with SRC. Interacts with YAP1; the interaction is required for ubiquitination of AMOTL2 and localization of YAP1 to tight junctions. Interacts with WWP1; the interaction facilitates WWP1 interaction with the Crumbs complex and subsequent WWP1 translocation to the plasma membrane. WWP1 interaction with the Crumbs complex promotes WWP1 monoubiquitination of AMOTL2 which subsequently activates the Hippo signaling pathway. When ubiquitinated interacts with LATS2 (via UBA domain); the interaction promotes LATS2 phosphorylation of YAP1. Interacts (via PPXY motif) with WWTR1/TAZ (via WW domain); the interaction promotes WWTR1/TAZ localization to the cytoplasm and thereby inhibition of its transcriptional properties. Interacts with PHLDB2; interaction may facilitate PHLDB2 localization to the myotube podosome cortex that surrounds the core. In terms of processing, monoubiquitinated at Lys-342 and Lys-403 by Crumbs complex-bound WWP1. De-ubiquitinated at Lys-342 and Lys-403 by USP9X; the interaction may be promoted by cell contact inhibition. Deubiquitination of AMOTL2 negatively regulates Hippo signaling activation. Phosphorylation at Tyr-107 is necessary for efficient binding to SRC and synergistically functioning with SRC to activate the downstream MAPK pathway.

It localises to the recycling endosome. Its subcellular location is the cytoplasm. It is found in the cell projection. The protein localises to the podosome. The protein resides in the cell junction. In terms of biological role, regulates the translocation of phosphorylated SRC to peripheral cell-matrix adhesion sites. Required for proper architecture of actin filaments. Plays a role in coupling actin fibers to cell junctions in endothelial cells and is therefore required for correct endothelial cell morphology via facilitating transcellular transmission of mechanical force resulting in endothelial cell elongation. Required for the anchoring of radial actin fibers to CDH1 junction complexes at the cell membrane which facilitates organization of radial actin fiber structure and cellular response to contractile forces. This contributes to maintenance of cell area, size, shape, epithelial sheet organization and trophectoderm cell properties that facilitate blastocyst zona hatching. Inhibits the Wnt/beta-catenin signaling pathway, probably by recruiting CTNNB1 to recycling endosomes and hence preventing its translocation to the nucleus. Participates in angiogenesis. Activates the Hippo signaling pathway in response to cell contact inhibition via interaction with and ubiquitination by Crumbs complex-bound WWP1. Ubiquitinated AMOTL2 then interacts with LATS2 which in turn phosphorylates YAP1, excluding it from the nucleus and localizing it to the cytoplasm and tight junctions, therefore ultimately repressing YAP1-driven transcription of target genes. Acts to inhibit WWTR1/TAZ transcriptional coactivator activity via sequestering WWTR1/TAZ in the cytoplasm and at tight junctions. Regulates the size and protein composition of the podosome cortex and core at myofibril neuromuscular junctions. Selectively promotes FGF-induced MAPK activation through SRC. May play a role in the polarity, proliferation and migration of endothelial cells. The chain is Angiomotin-like protein 2 from Rattus norvegicus (Rat).